A 275-amino-acid chain; its full sequence is Protein FAM210A (275 aa).

Residues 51–100 (KWLHSQPKQQDTATKTPVHDLPSGIQHQSEETSPSARSSISTDPSSIAEE) form a disordered region. Composition is skewed to polar residues over residues 56-65 (QPKQQDTATK) and 75-95 (IQHQ…TDPS). The 113-residue stretch at 105 to 217 (DQSIGLLKRF…GYLSTPPLVK (113 aa)) folds into the DUF1279 domain. The chain crosses the membrane as a helical span at residues 124–144 (VLIPVHLVTSSIWFGSFYYAA). A coiled-coil region spans residues 221–275 (QDRMEETKELFTEKMEETRDIISGKMEETKDRISEKLQETKDRVAFRKKKNEDME).

The protein belongs to the FAM210 family.

It localises to the membrane. It is found in the mitochondrion. The protein localises to the cytoplasm. In terms of biological role, may play a role in the structure and strength of both muscle and bone. The polypeptide is Protein FAM210A (fam210a) (Xenopus laevis (African clawed frog)).